The chain runs to 405 residues: Elongation factor Tu (405 aa).

Positions 10 to 215 (KPHVNVGTIG…AIDAYIPTPE (206 aa)) constitute a tr-type G domain. The interval 19 to 26 (GHVDHGKT) is G1. 19–26 (GHVDHGKT) provides a ligand contact to GTP. Residue Thr26 participates in Mg(2+) binding. A G2 region spans residues 61 to 65 (GITIN). The G3 stretch occupies residues 82-85 (DCPG). GTP contacts are provided by residues 82–86 (DCPGH) and 137–140 (NKVD). Positions 137–140 (NKVD) are G4. Residues 175–177 (SAL) form a G5 region.

Belongs to the TRAFAC class translation factor GTPase superfamily. Classic translation factor GTPase family. EF-Tu/EF-1A subfamily. As to quaternary structure, monomer.

The protein resides in the cytoplasm. The enzyme catalyses GTP + H2O = GDP + phosphate + H(+). In terms of biological role, GTP hydrolase that promotes the GTP-dependent binding of aminoacyl-tRNA to the A-site of ribosomes during protein biosynthesis. The chain is Elongation factor Tu from Deinococcus geothermalis (strain DSM 11300 / CIP 105573 / AG-3a).